The chain runs to 31 residues: Antifungal protein 1 (31 aa).

It localises to the secreted. Its function is as follows. Antifungal activity against C.albicans ATCC 76615. The sequence is that of Antifungal protein 1 from Musca domestica (House fly).